A 252-amino-acid polypeptide reads, in one-letter code: MRIKGKTAKYLQKLIDEGQPIHFSLIDPDKVKDIQSLSKVASSLFKAGTSAFLIGGTLGVSKEKLDSILSVLQDFSVPKIIFPSNINLISEKADAILFMSLLNSDDLYYVIGAQVSASIIVKTIGLEPIPTGYLIVGHGGTAAHIGRARVVPYDNPELAVAYALAAEYMGMEYLYLEAGSGAPDTVRPEMVKFVSKYSEINLIVGGGIRTPERAVELVKAGAKALVTGNVIETDIERAIKIIEAMQRVYRIE.

2 residues coordinate Mg(2+): Asp-27 and Thr-57. Sn-glycerol 1-phosphate is bound by residues 175–181 (YLEAGSG), 206–207 (GG), and 228–229 (GN).

The protein belongs to the GGGP/HepGP synthase family. Group II subfamily. Mg(2+) serves as cofactor.

It localises to the cytoplasm. It carries out the reaction sn-glycerol 1-phosphate + (2E,6E,10E)-geranylgeranyl diphosphate = sn-3-O-(geranylgeranyl)glycerol 1-phosphate + diphosphate. Its pathway is membrane lipid metabolism; glycerophospholipid metabolism. Its function is as follows. Prenyltransferase that catalyzes the transfer of the geranylgeranyl moiety of geranylgeranyl diphosphate (GGPP) to the C3 hydroxyl of sn-glycerol-1-phosphate (G1P). This reaction is the first ether-bond-formation step in the biosynthesis of archaeal membrane lipids. This chain is Geranylgeranylglyceryl phosphate synthase, found in Metallosphaera sedula (strain ATCC 51363 / DSM 5348 / JCM 9185 / NBRC 15509 / TH2).